A 126-amino-acid chain; its full sequence is Aspartate 1-decarboxylase (126 aa).

Catalysis depends on S25, which acts as the Schiff-base intermediate with substrate; via pyruvic acid. S25 is modified (pyruvic acid (Ser)). T57 is a binding site for substrate. Catalysis depends on Y58, which acts as the Proton donor. 73–75 (GGA) contacts substrate.

It belongs to the PanD family. Heterooctamer of four alpha and four beta subunits. Pyruvate is required as a cofactor. In terms of processing, is synthesized initially as an inactive proenzyme, which is activated by self-cleavage at a specific serine bond to produce a beta-subunit with a hydroxyl group at its C-terminus and an alpha-subunit with a pyruvoyl group at its N-terminus.

The protein localises to the cytoplasm. It carries out the reaction L-aspartate + H(+) = beta-alanine + CO2. Its pathway is cofactor biosynthesis; (R)-pantothenate biosynthesis; beta-alanine from L-aspartate: step 1/1. In terms of biological role, catalyzes the pyruvoyl-dependent decarboxylation of aspartate to produce beta-alanine. The sequence is that of Aspartate 1-decarboxylase from Xylella fastidiosa (strain 9a5c).